The primary structure comprises 151 residues: Small ribosomal subunit protein uS9 (151 aa).

This sequence belongs to the universal ribosomal protein uS9 family.

The chain is Small ribosomal subunit protein uS9 (RpS16) from Spodoptera frugiperda (Fall armyworm).